The chain runs to 141 residues: Nucleoside diphosphate kinase (141 aa).

The ATP site is built by Lys-11, Phe-59, Arg-87, Thr-93, Arg-104, and Asn-114. The Pros-phosphohistidine intermediate role is filled by His-117.

Belongs to the NDK family. As to quaternary structure, homotetramer. Mg(2+) serves as cofactor.

The protein resides in the cytoplasm. It catalyses the reaction a 2'-deoxyribonucleoside 5'-diphosphate + ATP = a 2'-deoxyribonucleoside 5'-triphosphate + ADP. The catalysed reaction is a ribonucleoside 5'-diphosphate + ATP = a ribonucleoside 5'-triphosphate + ADP. Its function is as follows. Major role in the synthesis of nucleoside triphosphates other than ATP. The ATP gamma phosphate is transferred to the NDP beta phosphate via a ping-pong mechanism, using a phosphorylated active-site intermediate. In Pseudomonas fluorescens (strain ATCC BAA-477 / NRRL B-23932 / Pf-5), this protein is Nucleoside diphosphate kinase.